Consider the following 342-residue polypeptide: 4-hydroxy-2-oxovalerate aldolase 2 (342 aa).

The Pyruvate carboxyltransferase domain occupies 8-260; sequence ITVHDMTLRD…ETGVDVFKIQ (253 aa). A substrate-binding site is contributed by 16 to 17; sequence RD. D17 provides a ligand contact to Mn(2+). H20 functions as the Proton acceptor in the catalytic mechanism. S170 and H199 together coordinate substrate. 2 residues coordinate Mn(2+): H199 and H201. Y290 contributes to the substrate binding site.

Belongs to the 4-hydroxy-2-oxovalerate aldolase family.

It carries out the reaction (S)-4-hydroxy-2-oxopentanoate = acetaldehyde + pyruvate. The polypeptide is 4-hydroxy-2-oxovalerate aldolase 2 (mhpE) (Azoarcus sp. (strain BH72)).